A 285-amino-acid polypeptide reads, in one-letter code: MTTLTHRARRTEISKNSEKKMESEEDSNWEKSPDNEDSGDSKDIRLTLMEEVLLLGLKDKEGYTSFWNDCISSGLRGGILIELAMRGRIYLEPPTMRKKRLLDRKVLLKSDSPTGDVLLDETLKHIKATEPTETVQTWIELLTGETWNPFKLQYQLRNVRERIAKNLVEKGILTTEKQNFLLFDMTTHPVTNTTEKQRLVKKLQDSVLERWVNDPQRMDKRTLALLVLAHSSDVLENVFSSLTDDKYDVAMNRAKDLVELDPEVEGTKPSATEMIWAVLAAFNKS.

Positions 1–42 are disordered; that stretch reads MTTLTHRARRTEISKNSEKKMESEEDSNWEKSPDNEDSGDSK. Residues 10–42 show a composition bias toward basic and acidic residues; it reads RTEISKNSEKKMESEEDSNWEKSPDNEDSGDSK. A 1,2-diacyl-sn-glycero-3-phospho-(1D-myo-inositol 4-phosphate)-binding residues include Trp67 and Arg76. Ser112 bears the Phosphoserine mark. A 1,2-diacyl-sn-glycero-3-phospho-(1D-myo-inositol 4-phosphate) is bound by residues Arg157 and Arg160. Positions 176-187 are beta-hairpin required for oligomerization; the sequence is EKQNFLLFDMTT.

It belongs to the GOLPH3/VPS74 family. In terms of assembly, homooligomer. Does not interact MYO18; differs from GOLPH3 by its inability to interact with MYO18. May interact with ARF1.

Its subcellular location is the golgi apparatus. It localises to the golgi stack membrane. It is found in the trans-Golgi network membrane. Functionally, phosphatidylinositol-4-phosphate-binding protein that may antagonize the action of GOLPH3 which is required for the process of vesicle budding at the Golgi and anterograde transport to the plasma membrane. This chain is Golgi phosphoprotein 3-like (GOLPH3L), found in Homo sapiens (Human).